A 375-amino-acid polypeptide reads, in one-letter code: Alcohol dehydrogenase 1 (375 aa).

The residue at position 2 (serine 2) is an N-acetylserine. Zn(2+) is bound by residues cysteine 47, histidine 68, cysteine 98, cysteine 101, cysteine 104, cysteine 112, and cysteine 175. NAD(+)-binding positions include 200-205 (GLGGVG), aspartate 224, and lysine 229. Lysine 234 carries the post-translational modification N6-succinyllysine. 293–295 (VGV) provides a ligand contact to NAD(+). Residue lysine 340 is modified to N6-succinyllysine. Residue arginine 370 coordinates NAD(+).

This sequence belongs to the zinc-containing alcohol dehydrogenase family. Class-I subfamily. Zn(2+) serves as cofactor.

It is found in the cytoplasm. The catalysed reaction is a primary alcohol + NAD(+) = an aldehyde + NADH + H(+). The enzyme catalyses a secondary alcohol + NAD(+) = a ketone + NADH + H(+). In Peromyscus maniculatus (North American deer mouse), this protein is Alcohol dehydrogenase 1 (ADH1).